The primary structure comprises 155 residues: Cell division protein SepF (155 aa).

The span at 22–46 (RYVEEPEQRDERPALEKGRAPKEKQ) shows a compositional bias: basic and acidic residues. The disordered stretch occupies residues 22–54 (RYVEEPEQRDERPALEKGRAPKEKQTAGMEQNQ).

Belongs to the SepF family. As to quaternary structure, homodimer. Interacts with FtsZ.

It localises to the cytoplasm. Functionally, cell division protein that is part of the divisome complex and is recruited early to the Z-ring. Probably stimulates Z-ring formation, perhaps through the cross-linking of FtsZ protofilaments. Its function overlaps with FtsA. The protein is Cell division protein SepF of Shouchella clausii (strain KSM-K16) (Alkalihalobacillus clausii).